A 288-amino-acid chain; its full sequence is Purine nucleoside phosphorylase (288 aa).

Residue 65–66 (RN) coordinates phosphate. Met201 serves as a coordination point for substrate. Phosphate is bound at residue Thr202.

Belongs to the PNP/MTAP phosphorylase family. MTAP subfamily. As to quaternary structure, homotrimer.

Its subcellular location is the cytoplasm. It localises to the nucleus. It catalyses the reaction a purine D-ribonucleoside + phosphate = a purine nucleobase + alpha-D-ribose 1-phosphate. It participates in purine metabolism; purine nucleoside salvage. Functionally, purine nucleoside phosphorylase involved in purine salvage. The sequence is that of Purine nucleoside phosphorylase from Drosophila pseudoobscura pseudoobscura (Fruit fly).